Consider the following 317-residue polypeptide: Ferrochelatase (317 aa).

His192 and Glu271 together coordinate Fe cation.

It belongs to the ferrochelatase family.

It localises to the cytoplasm. It catalyses the reaction heme b + 2 H(+) = protoporphyrin IX + Fe(2+). It participates in porphyrin-containing compound metabolism; protoheme biosynthesis; protoheme from protoporphyrin-IX: step 1/1. Catalyzes the ferrous insertion into protoporphyrin IX. This is Ferrochelatase from Geobacter sp. (strain M21).